Consider the following 437-residue polypeptide: tRNA-2-methylthio-N(6)-dimethylallyladenosine synthase (437 aa).

Positions 5 to 121 (KKLYIKTYGC…LPELTARAAT (117 aa)) constitute an MTTase N-terminal domain. The [4Fe-4S] cluster site is built by cysteine 14, cysteine 50, cysteine 84, cysteine 159, cysteine 163, and cysteine 166. The 227-residue stretch at 145-371 (AKRGPTAFLT…QALLTRQQRA (227 aa)) folds into the Radical SAM core domain. Residues 374–436 (DAKVGTTARV…ANSLRGVLIA (63 aa)) form the TRAM domain.

The protein belongs to the methylthiotransferase family. MiaB subfamily. Monomer. [4Fe-4S] cluster is required as a cofactor.

The protein resides in the cytoplasm. It catalyses the reaction N(6)-dimethylallyladenosine(37) in tRNA + (sulfur carrier)-SH + AH2 + 2 S-adenosyl-L-methionine = 2-methylsulfanyl-N(6)-dimethylallyladenosine(37) in tRNA + (sulfur carrier)-H + 5'-deoxyadenosine + L-methionine + A + S-adenosyl-L-homocysteine + 2 H(+). Functionally, catalyzes the methylthiolation of N6-(dimethylallyl)adenosine (i(6)A), leading to the formation of 2-methylthio-N6-(dimethylallyl)adenosine (ms(2)i(6)A) at position 37 in tRNAs that read codons beginning with uridine. The chain is tRNA-2-methylthio-N(6)-dimethylallyladenosine synthase from Dinoroseobacter shibae (strain DSM 16493 / NCIMB 14021 / DFL 12).